Reading from the N-terminus, the 205-residue chain is DNA-directed RNA polymerase subunit 5 (205 aa).

This sequence belongs to the archaeal Rpo5/eukaryotic RPB5 RNA polymerase subunit family.

The protein localises to the virion. The catalysed reaction is RNA(n) + a ribonucleoside 5'-triphosphate = RNA(n+1) + diphosphate. Its function is as follows. DNA-dependent RNA polymerase catalyzes the transcription of DNA into RNA using the four ribonucleoside triphosphates as substrates. This Acanthamoeba polyphaga (Amoeba) protein is DNA-directed RNA polymerase subunit 5.